The following is a 473-amino-acid chain: Ornithine aminotransferase, mitochondrial (473 aa).

The transit peptide at 1 to 32 directs the protein to the mitochondrion; that stretch reads MAAALARRGGGGLARALARGRGMCSATAAERA. K293 is subject to N6-(pyridoxal phosphate)lysine.

It belongs to the class-III pyridoxal-phosphate-dependent aminotransferase family. As to quaternary structure, homotetramer. The cofactor is pyridoxal 5'-phosphate.

It localises to the mitochondrion matrix. It carries out the reaction a 2-oxocarboxylate + L-ornithine = L-glutamate 5-semialdehyde + an L-alpha-amino acid. It functions in the pathway amino-acid biosynthesis; L-proline biosynthesis; L-glutamate 5-semialdehyde from L-ornithine: step 1/1. Confers drought and oxidative stress tolerance mainly through enhancing ROS-scavenging capacity and Pro pre-accumulation. This Oryza sativa subsp. japonica (Rice) protein is Ornithine aminotransferase, mitochondrial (OAT).